A 391-amino-acid chain; its full sequence is Polyisoprenyl-teichoic acid--peptidoglycan teichoic acid transferase TagV (391 aa).

At 1-23 the chain is on the cytoplasmic side; it reads MAERVRVRVRKKKKSKRRKILKR. The chain crosses the membrane as a helical; Signal-anchor for type II membrane protein span at residues 24-44; sequence IMLLFALALLVVVGLGGYKLY. Residues 45–391 lie on the Extracellular side of the membrane; sequence KTINAADESY…TTNSTTDSSY (347 aa). The disordered stretch occupies residues 329-391; it reads DYTPDTSTGT…TTNSTTDSSY (63 aa). Residues 333–391 are compositionally biased toward low complexity; it reads DTSTGTSGTEDGTDSSSSSGSTGSTGTTTDGTTNGSSYSNDSSTSSNNSTTNSTTDSSY.

It belongs to the LytR/CpsA/Psr (LCP) family.

It localises to the cell membrane. Its pathway is cell wall biogenesis. Functionally, may catalyze the final step in cell wall teichoic acid biosynthesis, the transfer of the anionic cell wall polymers (APs) from their lipid-linked precursor to the cell wall peptidoglycan (PG). This is Polyisoprenyl-teichoic acid--peptidoglycan teichoic acid transferase TagV from Bacillus subtilis (strain 168).